The chain runs to 549 residues: Chaperonin GroEL (549 aa).

ATP contacts are provided by residues 30–33, lysine 51, 87–91, glycine 415, and aspartate 497; these read TLGP and DGTTT.

Belongs to the chaperonin (HSP60) family. As to quaternary structure, forms a cylinder of 14 subunits composed of two heptameric rings stacked back-to-back. Interacts with the co-chaperonin GroES.

The protein localises to the cytoplasm. It carries out the reaction ATP + H2O + a folded polypeptide = ADP + phosphate + an unfolded polypeptide.. In terms of biological role, together with its co-chaperonin GroES, plays an essential role in assisting protein folding. The GroEL-GroES system forms a nano-cage that allows encapsulation of the non-native substrate proteins and provides a physical environment optimized to promote and accelerate protein folding. This chain is Chaperonin GroEL, found in Pectobacterium atrosepticum (strain SCRI 1043 / ATCC BAA-672) (Erwinia carotovora subsp. atroseptica).